A 257-amino-acid polypeptide reads, in one-letter code: Putative B3 domain-containing protein At2g27410 (257 aa).

Positions 5–50 (ARTTKINHFRGTSTTQNPNRGLEPSPSSYVTRRSKEKRPINVEKRS) are disordered. Residues 8 to 35 (TKINHFRGTSTTQNPNRGLEPSPSSYVT) show a composition bias toward polar residues. A DNA-binding region (TF-B3) is located at residues 115-209 (TPDFLTEDET…KLCFALTPKN (95 aa)). Residues 212–257 (RGNSLPGGDGASTSGESGQVPLPIPPARYSSNSGQGCSGESSSSSS) form a disordered region. Positions 241 to 257 (SSNSGQGCSGESSSSSS) are enriched in low complexity.

The protein resides in the nucleus. The sequence is that of Putative B3 domain-containing protein At2g27410 from Arabidopsis thaliana (Mouse-ear cress).